Consider the following 516-residue polypeptide: Endoglucanase 20 (516 aa).

Positions Met-1 to Gly-23 are cleaved as a signal peptide. Asn-83 carries N-linked (GlcNAc...) asparagine glycosylation. Catalysis depends on Asp-93, which acts as the Nucleophile. Residues His-416, Asp-468, and Glu-477 contribute to the active site.

It belongs to the glycosyl hydrolase 9 (cellulase E) family.

It localises to the secreted. It catalyses the reaction Endohydrolysis of (1-&gt;4)-beta-D-glucosidic linkages in cellulose, lichenin and cereal beta-D-glucans.. The polypeptide is Endoglucanase 20 (GLU15) (Oryza sativa subsp. japonica (Rice)).